The following is a 165-amino-acid chain: Nucleotide-binding protein SYNW1816 (165 aa).

Belongs to the YajQ family.

Nucleotide-binding protein. This is Nucleotide-binding protein SYNW1816 from Parasynechococcus marenigrum (strain WH8102).